Consider the following 380-residue polypeptide: Erythronate-4-phosphate dehydrogenase (380 aa).

Residues serine 45 and threonine 66 each coordinate substrate. NAD(+)-binding positions include 126-127 (QV), aspartate 146, threonine 174, 205-207 (ASR), and aspartate 231. Residue arginine 207 is part of the active site. Glutamate 236 is an active-site residue. Histidine 253 acts as the Proton donor in catalysis. Residue glycine 256 participates in NAD(+) binding. A substrate-binding site is contributed by tyrosine 257.

This sequence belongs to the D-isomer specific 2-hydroxyacid dehydrogenase family. PdxB subfamily. Homodimer.

It is found in the cytoplasm. It catalyses the reaction 4-phospho-D-erythronate + NAD(+) = (R)-3-hydroxy-2-oxo-4-phosphooxybutanoate + NADH + H(+). Its pathway is cofactor biosynthesis; pyridoxine 5'-phosphate biosynthesis; pyridoxine 5'-phosphate from D-erythrose 4-phosphate: step 2/5. Catalyzes the oxidation of erythronate-4-phosphate to 3-hydroxy-2-oxo-4-phosphonooxybutanoate. In Pseudomonas syringae pv. tomato (strain ATCC BAA-871 / DC3000), this protein is Erythronate-4-phosphate dehydrogenase.